The primary structure comprises 457 residues: Bifunctional protein GlmU (457 aa).

The pyrophosphorylase stretch occupies residues 1–229 (MDLAAVILAA…PVEVTGINDR (229 aa)). Residues 8–11 (LAAG), K22, Q72, and 77–78 (GT) each bind UDP-N-acetyl-alpha-D-glucosamine. Mg(2+) is bound at residue D102. 4 residues coordinate UDP-N-acetyl-alpha-D-glucosamine: G139, E154, N169, and N227. N227 contributes to the Mg(2+) binding site. The interval 230 to 250 (RQLAEVEKYLRRRVLEDLMQS) is linker. The N-acetyltransferase stretch occupies residues 251–457 (GVTVLDPAST…WAAKKRDKKV (207 aa)). The UDP-N-acetyl-alpha-D-glucosamine site is built by R332 and K350. Residue H362 is the Proton acceptor of the active site. Residues Y365 and N376 each contribute to the UDP-N-acetyl-alpha-D-glucosamine site. Acetyl-CoA-binding positions include 385-386 (NY), S404, A422, and R439.

This sequence in the N-terminal section; belongs to the N-acetylglucosamine-1-phosphate uridyltransferase family. In the C-terminal section; belongs to the transferase hexapeptide repeat family. Homotrimer. Requires Mg(2+) as cofactor.

It localises to the cytoplasm. It carries out the reaction alpha-D-glucosamine 1-phosphate + acetyl-CoA = N-acetyl-alpha-D-glucosamine 1-phosphate + CoA + H(+). It catalyses the reaction N-acetyl-alpha-D-glucosamine 1-phosphate + UTP + H(+) = UDP-N-acetyl-alpha-D-glucosamine + diphosphate. Its pathway is nucleotide-sugar biosynthesis; UDP-N-acetyl-alpha-D-glucosamine biosynthesis; N-acetyl-alpha-D-glucosamine 1-phosphate from alpha-D-glucosamine 6-phosphate (route II): step 2/2. It participates in nucleotide-sugar biosynthesis; UDP-N-acetyl-alpha-D-glucosamine biosynthesis; UDP-N-acetyl-alpha-D-glucosamine from N-acetyl-alpha-D-glucosamine 1-phosphate: step 1/1. It functions in the pathway bacterial outer membrane biogenesis; LPS lipid A biosynthesis. In terms of biological role, catalyzes the last two sequential reactions in the de novo biosynthetic pathway for UDP-N-acetylglucosamine (UDP-GlcNAc). The C-terminal domain catalyzes the transfer of acetyl group from acetyl coenzyme A to glucosamine-1-phosphate (GlcN-1-P) to produce N-acetylglucosamine-1-phosphate (GlcNAc-1-P), which is converted into UDP-GlcNAc by the transfer of uridine 5-monophosphate (from uridine 5-triphosphate), a reaction catalyzed by the N-terminal domain. The polypeptide is Bifunctional protein GlmU (Pelotomaculum thermopropionicum (strain DSM 13744 / JCM 10971 / SI)).